The following is a 101-amino-acid chain: Small ribosomal subunit protein uS14 (101 aa).

Belongs to the universal ribosomal protein uS14 family. Part of the 30S ribosomal subunit. Contacts proteins S3 and S10.

Its function is as follows. Binds 16S rRNA, required for the assembly of 30S particles and may also be responsible for determining the conformation of the 16S rRNA at the A site. The chain is Small ribosomal subunit protein uS14 from Brucella anthropi (strain ATCC 49188 / DSM 6882 / CCUG 24695 / JCM 21032 / LMG 3331 / NBRC 15819 / NCTC 12168 / Alc 37) (Ochrobactrum anthropi).